Reading from the N-terminus, the 399-residue chain is S-adenosylmethionine synthase (399 aa).

H16 contributes to the ATP binding site. D18 is a Mg(2+) binding site. K(+) is bound at residue E44. Positions 57 and 100 each coordinate L-methionine. Residues 100-110 (QSSDIAQGVNE) form a flexible loop region. Residues 177–179 (DAK), 244–245 (RF), D253, 259–260 (RK), A276, and K280 each bind ATP. L-methionine is bound at residue D253. Position 284 (K284) interacts with L-methionine.

This sequence belongs to the AdoMet synthase family. Homotetramer; dimer of dimers. Requires Mg(2+) as cofactor. K(+) is required as a cofactor.

Its subcellular location is the cytoplasm. The enzyme catalyses L-methionine + ATP + H2O = S-adenosyl-L-methionine + phosphate + diphosphate. It functions in the pathway amino-acid biosynthesis; S-adenosyl-L-methionine biosynthesis; S-adenosyl-L-methionine from L-methionine: step 1/1. Catalyzes the formation of S-adenosylmethionine (AdoMet) from methionine and ATP. The overall synthetic reaction is composed of two sequential steps, AdoMet formation and the subsequent tripolyphosphate hydrolysis which occurs prior to release of AdoMet from the enzyme. In Lactococcus lactis subsp. cremoris (strain MG1363), this protein is S-adenosylmethionine synthase.